Consider the following 229-residue polypeptide: Ribonuclease HII (229 aa).

The RNase H type-2 domain maps to W34 to M223. D40, E41, and D131 together coordinate a divalent metal cation. Residues M209–E229 are disordered. A compositionally biased stretch (acidic residues) spans G220–E229.

The protein belongs to the RNase HII family. Requires Mn(2+) as cofactor. The cofactor is Mg(2+).

The protein localises to the cytoplasm. It catalyses the reaction Endonucleolytic cleavage to 5'-phosphomonoester.. Its function is as follows. Endonuclease that specifically degrades the RNA of RNA-DNA hybrids. In Rhizobium etli (strain CIAT 652), this protein is Ribonuclease HII.